A 936-amino-acid chain; its full sequence is Translation initiation factor IF-2 (936 aa).

The segment at 102–332 (PEPGPVLKKD…SGSRQKFRKM (231 aa)) is disordered. Positions 108–119 (LKKDHVHEEPEK) are enriched in basic and acidic residues. A compositionally biased stretch (acidic residues) spans 127-137 (SEPEVEPEVEP). Over residues 151–160 (PTEAVSVPEP) the composition is skewed to low complexity. Over residues 182–194 (QSSTMKAQASPEM) the composition is skewed to polar residues. Composition is skewed to basic and acidic residues over residues 217 to 227 (SALDRGSESDR) and 237 to 267 (KEQA…EAKT). Positions 272 to 281 (KAAGTTGSAA) are enriched in low complexity. The span at 287-297 (SKKKKGGKKKK) shows a compositional bias: basic residues. One can recognise a tr-type G domain in the interval 433–603 (IRPPVVTIMG…LMEAEIRELK (171 aa)). The tract at residues 442 to 449 (GHVDHGKT) is G1. Position 442–449 (442–449 (GHVDHGKT)) interacts with GTP. The G2 stretch occupies residues 467–471 (GITQH). Residues 489–492 (DTPG) are G3. Residues 489-493 (DTPGH) and 543-546 (NKID) contribute to the GTP site. The segment at 543–546 (NKID) is G4. The tract at residues 579-581 (SAK) is G5.

The protein belongs to the TRAFAC class translation factor GTPase superfamily. Classic translation factor GTPase family. IF-2 subfamily.

It is found in the cytoplasm. Its function is as follows. One of the essential components for the initiation of protein synthesis. Protects formylmethionyl-tRNA from spontaneous hydrolysis and promotes its binding to the 30S ribosomal subunits. Also involved in the hydrolysis of GTP during the formation of the 70S ribosomal complex. In Prosthecochloris aestuarii (strain DSM 271 / SK 413), this protein is Translation initiation factor IF-2.